The chain runs to 478 residues: Sporozoite surface protein P36p (478 aa).

The N-terminal stretch at 1–41 is a signal peptide; that stretch reads MYVLVLIHMCYHFTMKRKKLFVYFIFLSFIINFNFNININF. 6-Cys domains follow at residues 42–178 and 181–326; these read VCSN…IKKT and KIKG…FDNN. Disulfide bonds link Cys59–Cys71, Cys85–Cys159, Cys102–Cys157, Cys185–Cys209, Cys223–Cys302, and Cys243–Cys300. Asn109 and Asn138 each carry an N-linked (GlcNAc...) asparagine glycan. Asn229, Asn279, and Asn291 each carry an N-linked (GlcNAc...) asparagine glycan. Residue Ser455 is the site of GPI-anchor amidated serine attachment. The propeptide at 456-478 is removed in mature form; that stretch reads SSKYILFNNFLILFIFLIYIYST.

It is found in the cell surface. The protein localises to the cell membrane. Involved in sporozoite infection of hepatocytes and replication therein. In Plasmodium falciparum (isolate 3D7), this protein is Sporozoite surface protein P36p (PF52).